The following is a 228-amino-acid chain: MSDLAKTAQRRALRSSGSARPDEDVPAPNRRGNRLPRDERRGQLLVVASDVFVDRGYHAAGMDEIADRAGVSKPVLYQHFSSKLELYLAVLHRHVENLVSGVHQALSTTTDNRQRLHVAVQAFFDFIEHDSQGYRLIFENDFVTEPEVAAQVRVATESCIDAVFALISADSGLDPHRARMIAVGLVGMSVDCARYWLDADKPISKSDAVEGTVQFAWGGLSHVPLTRS.

Residues 1 to 39 (MSDLAKTAQRRALRSSGSARPDEDVPAPNRRGNRLPRDE) are disordered. One can recognise an HTH tetR-type domain in the interval 38–98 (DERRGQLLVV…AVLHRHVENL (61 aa)). The H-T-H motif DNA-binding region spans 61 to 80 (GMDEIADRAGVSKPVLYQHF).

As to quaternary structure, homodimer.

FasR:DNA binding is regulated by long-chain acyl-CoAs (C14- to C26-CoA), which act as effector molecules that modulate the affinity of FasR for its DNA binding sequences and therefore modulate the expression of the essential fas-acpS operon. FasR activity is not affected by mycolic acid biosynthesis intermediates. Its function is as follows. Transcriptional activator that plays a central role in sensing mycobacterial long-chain fatty acids and regulating lipid biosynthesis. Activates the expression of the genes encoding the fatty acid synthase (fas) and the 4-phosphopantetheinyl transferase (acpS), whose products are involved in the fatty acid and mycolic acid biosynthesis. Specifically binds to three conserved operator sequences present in the fas-acpS promoter region. Not essential for M.tuberculosis viability, although it is required for the optimal growth in vitro and for virulence in macrophages and in a mouse model of infection. The chain is HTH-type transcriptional activator FasR from Mycobacterium tuberculosis (strain ATCC 25618 / H37Rv).